We begin with the raw amino-acid sequence, 441 residues long: Adenylyltransferase and sulfurtransferase MOCS3 (441 aa).

ATP-binding positions include Gly83, Asp104, Thr111–Arg115, Lys128, and Asp172–Asn173. Zn(2+) is bound by residues Cys213 and Cys216. The active-site Glycyl thioester intermediate; for adenylyltransferase activity is the Cys230. Cys288 and Cys291 together coordinate Zn(2+). A Rhodanese domain is found at Ala339 to Pro439. Residue Cys395 is the Cysteine persulfide intermediate; for sulfurtransferase activity of the active site.

The protein in the N-terminal section; belongs to the HesA/MoeB/ThiF family. UBA4 subfamily. The cofactor is Zn(2+).

The protein resides in the cytoplasm. The enzyme catalyses [molybdopterin-synthase sulfur-carrier protein]-C-terminal Gly-Gly + ATP + H(+) = [molybdopterin-synthase sulfur-carrier protein]-C-terminal Gly-Gly-AMP + diphosphate. It carries out the reaction [molybdopterin-synthase sulfur-carrier protein]-C-terminal Gly-Gly-AMP + S-sulfanyl-L-cysteinyl-[cysteine desulfurase] + AH2 = [molybdopterin-synthase sulfur-carrier protein]-C-terminal-Gly-aminoethanethioate + L-cysteinyl-[cysteine desulfurase] + A + AMP + 2 H(+). It functions in the pathway tRNA modification; 5-methoxycarbonylmethyl-2-thiouridine-tRNA biosynthesis. Its pathway is cofactor biosynthesis; molybdopterin biosynthesis. In terms of biological role, plays a central role in 2-thiolation of mcm(5)S(2)U at tRNA wobble positions of cytosolic tRNA(Lys), tRNA(Glu) and tRNA(Gln). Also essential during biosynthesis of the molybdenum cofactor. Acts by mediating the C-terminal thiocarboxylation of sulfur carriers URM1 and MOCS2A. Its N-terminus first activates URM1 and MOCS2A as acyl-adenylates (-COAMP), then the persulfide sulfur on the catalytic cysteine is transferred to URM1 and MOCS2A to form thiocarboxylation (-COSH) of their C-terminus. The reaction probably involves hydrogen sulfide that is generated from the persulfide intermediate and that acts as a nucleophile towards URM1 and MOCS2A. Subsequently, a transient disulfide bond is formed. Does not use thiosulfate as sulfur donor; NFS1 probably acting as a sulfur donor for thiocarboxylation reactions. The protein is Adenylyltransferase and sulfurtransferase MOCS3 of Anopheles gambiae (African malaria mosquito).